The following is a 182-amino-acid chain: Probable inosine/xanthosine triphosphatase (182 aa).

2 residues coordinate Mg(2+): Glu-42 and Asp-69.

It belongs to the YjjX NTPase family. Homodimer. Mg(2+) serves as cofactor. The cofactor is Mn(2+).

The enzyme catalyses XTP + H2O = XDP + phosphate + H(+). It catalyses the reaction ITP + H2O = IDP + phosphate + H(+). Phosphatase that hydrolyzes non-canonical purine nucleotides such as XTP and ITP to their respective diphosphate derivatives. Probably excludes non-canonical purines from DNA/RNA precursor pool, thus preventing their incorporation into DNA/RNA and avoiding chromosomal lesions. The protein is Probable inosine/xanthosine triphosphatase of Methanothermobacter thermautotrophicus (strain ATCC 29096 / DSM 1053 / JCM 10044 / NBRC 100330 / Delta H) (Methanobacterium thermoautotrophicum).